The following is a 436-amino-acid chain: uncharacterized protein (436 aa).

The chain crosses the membrane as a helical span at residues 1–21 (MILLQVICTIWTCLFIPLLNA). BNR repeat units lie at residues 57-68 (WISSDSGENWEA) and 101-112 (YVTDDRGKSWRA). Asparagine 157 carries N-linked (GlcNAc...) asparagine glycosylation. BNR repeat units lie at residues 229–240 (ALSTDGGKTFKK) and 394–405 (KISVDNGLTWSN).

It is found in the membrane. This is an uncharacterized protein from Saccharomyces cerevisiae (strain ATCC 204508 / S288c) (Baker's yeast).